The sequence spans 207 residues: Suppressor of IKBKE 1 (207 aa).

Coiled coils occupy residues 70-102 and 162-193; these read HILL…DALE and QFCK…SLQA.

It belongs to the SIKE family. Interacts with IKBKE and TBK1 via its coiled coil region. Interaction with TBK1 is disrupted upon viral infection or TLR3 stimulation. Interacts with CDC42BPB. Interacts with SIKE1 which mediates association with the STRIPAK core complex composed of PP2A catalytic and scaffolding subunits, the striatins (PP2A regulatory subunits), the striatin-associated proteins MOB4, STRIP1 and STRIP2, PDCD10 and members of the STE20 kinases, such as STK24 and STK26. In terms of tissue distribution, widely expressed. Expressed in brain, heart, skeletal muscle, colon, thymus, spleen, kidney, liver, small intestine, placenta, lung and leukocytes. Present in all cell lines tested (at protein level).

The protein resides in the cytoplasm. Physiological suppressor of IKK-epsilon and TBK1 that plays an inhibitory role in virus- and TLR3-triggered IRF3. Inhibits TLR3-mediated activation of interferon-stimulated response elements (ISRE) and the IFN-beta promoter. May act by disrupting the interactions of IKBKE or TBK1 with TICAM1/TRIF, IRF3 and RIGI. Does not inhibit NF-kappa-B activation pathways. Associates with the striatin-interacting phosphatase and kinase (STRIPAK) core complex, forming the extended (SIKE1:SLMAP)STRIPAK complex. The (SIKE1:SLMAP)STRIPAK complex dephosphorylates STK3 leading to the inhibition of Hippo signaling and the control of cell growth. The protein is Suppressor of IKBKE 1 of Homo sapiens (Human).